We begin with the raw amino-acid sequence, 208 residues long: Putative 3-methyladenine DNA glycosylase (208 aa).

It belongs to the DNA glycosylase MPG family.

The protein is Putative 3-methyladenine DNA glycosylase of Prosthecochloris aestuarii (strain DSM 271 / SK 413).